A 295-amino-acid polypeptide reads, in one-letter code: Polyisoprenoid diphosphate/phosphate phosphohydrolase PLPP6 (295 aa).

Disordered stretches follow at residues 1 to 39 and 61 to 90; these read MPSP…SRFE and SESP…PEED. The Cytoplasmic portion of the chain corresponds to 1-132; the sequence is MPSPRRSMEG…ESSSWGSVRP (132 aa). Residues 16 to 27 are compositionally biased toward low complexity; that stretch reads SASSSSSSPGSP. 3 positions are modified to phosphoserine: Ser26, Ser36, and Ser70. A helical membrane pass occupies residues 133–153; it reads LMKLLEISGHGIPWLLGTLYC. Topologically, residues 154 to 164 are lumenal; it reads LCRSDSWAGRE. The chain crosses the membrane as a helical span at residues 165–185; the sequence is VLMNLLFALLLDLLLVALIKG. Positions 184 to 192 are phosphatase sequence motif I; that stretch reads KGLVRRRRP. Topologically, residues 186–228 are cytoplasmic; the sequence is LVRRRRPAHNQMDMFVTLSVDKYSFPSGHATRAALMSRFILNH. The segment at 211–214 is phosphatase sequence motif II; the sequence is PSGH. Catalysis depends on His214, which acts as the Proton donors. Residues 229 to 249 traverse the membrane as a helical segment; it reads LVLAIPLRVLVVLWAFVLGLS. The tract at residues 249-260 is phosphatase sequence motif III; the sequence is SRVMLGRHNVTD. The Lumenal segment spans residues 250–260; the sequence is RVMLGRHNVTD. His256 serves as the catalytic Nucleophile. The helical transmembrane segment at 261–281 threads the bilayer; it reads VAFGFFLGYMQYSIVDYCWLS. The Cytoplasmic portion of the chain corresponds to 282-295; sequence PHNAPVLFLLWSQR.

Belongs to the PA-phosphatase related phosphoesterase family. Phosphorylation by PKC activates the phosphatase activity towards presqualene diphosphate. In terms of tissue distribution, widely expressed. Expressed in most organs, in particular gastrointestinal organs, spleen, placenta, kidney, thymus and brain.

It is found in the endoplasmic reticulum membrane. The protein localises to the nucleus envelope. Its subcellular location is the nucleus inner membrane. It catalyses the reaction presqualene diphosphate + H2O = presqualene phosphate + phosphate + H(+). The catalysed reaction is presqualene phosphate + H2O = presqualene alcohol + phosphate. It carries out the reaction (2E,6E)-farnesyl diphosphate + H2O = (2E,6E)-farnesyl phosphate + phosphate + H(+). The enzyme catalyses (2E,6E)-farnesyl phosphate + H2O = (2E,6E)-farnesol + phosphate. It catalyses the reaction (2E,6E,10E)-geranylgeranyl diphosphate + H2O = (2E,6E,10E)-geranylgeranyl phosphate + phosphate + H(+). The catalysed reaction is (2E,6E,10E)-geranylgeranyl phosphate + H2O = (2E,6E,10E)-geranylgeraniol + phosphate. It carries out the reaction (2E)-geranyl diphosphate + H2O = (2E)-geranyl phosphate + phosphate + H(+). The enzyme catalyses (2E)-geranyl phosphate + H2O = (2E)-geraniol + phosphate. It catalyses the reaction 1,2-dihexadecanoyl-sn-glycero-3-phosphate + H2O = 1,2-dihexadecanoyl-sn-glycerol + phosphate. Its activity is regulated as follows. Inhibited by propranolol. Not inhibited by N-ethylmaleimide or bromoenolactome. Its function is as follows. Magnesium-independent polyisoprenoid diphosphatase that catalyzes the sequential dephosphorylation of presqualene, farnesyl, geranyl and geranylgeranyl diphosphates. Functions in the innate immune response through the dephosphorylation of presqualene diphosphate which acts as a potent inhibitor of the signaling pathways contributing to polymorphonuclear neutrophils activation. May regulate the biosynthesis of cholesterol and related sterols by dephosphorylating presqualene and farnesyl diphosphate, two key intermediates in this biosynthetic pathway. May also play a role in protein prenylation by acting on farnesyl diphosphate and its derivative geranylgeranyl diphosphate, two precursors for the addition of isoprenoid anchors to membrane proteins. Has a lower activity towards phosphatidic acid (PA), but through phosphatidic acid dephosphorylation may participate in the biosynthesis of phospholipids and triacylglycerols. May also act on ceramide-1-P, lysophosphatidic acid (LPA) and sphing-4-enine 1-phosphate/sphingosine-1-phosphate. This chain is Polyisoprenoid diphosphate/phosphate phosphohydrolase PLPP6, found in Homo sapiens (Human).